A 238-amino-acid chain; its full sequence is Probable transcriptional regulatory protein Sde_1551 (238 aa).

The protein belongs to the TACO1 family.

Its subcellular location is the cytoplasm. The chain is Probable transcriptional regulatory protein Sde_1551 from Saccharophagus degradans (strain 2-40 / ATCC 43961 / DSM 17024).